Here is a 105-residue protein sequence, read N- to C-terminus: Large ribosomal subunit protein uL24 (105 aa).

The protein belongs to the universal ribosomal protein uL24 family. Part of the 50S ribosomal subunit.

Its function is as follows. One of two assembly initiator proteins, it binds directly to the 5'-end of the 23S rRNA, where it nucleates assembly of the 50S subunit. Functionally, one of the proteins that surrounds the polypeptide exit tunnel on the outside of the subunit. This chain is Large ribosomal subunit protein uL24, found in Francisella tularensis subsp. novicida (strain U112).